A 448-amino-acid chain; its full sequence is SET domain-containing protein SmydA-8, isoform B (448 aa).

Residues 42–273 (PSWRVADSPI…AGAEITMSYA (232 aa)) enclose the SET domain.

The protein belongs to the class V-like SAM-binding methyltransferase superfamily.

This is SET domain-containing protein SmydA-8, isoform B from Drosophila melanogaster (Fruit fly).